The following is a 138-amino-acid chain: ATP synthase epsilon chain (138 aa).

It belongs to the ATPase epsilon chain family. As to quaternary structure, F-type ATPases have 2 components, CF(1) - the catalytic core - and CF(0) - the membrane proton channel. CF(1) has five subunits: alpha(3), beta(3), gamma(1), delta(1), epsilon(1). CF(0) has three main subunits: a, b and c.

The protein resides in the cell inner membrane. Its function is as follows. Produces ATP from ADP in the presence of a proton gradient across the membrane. The chain is ATP synthase epsilon chain from Citrifermentans bemidjiense (strain ATCC BAA-1014 / DSM 16622 / JCM 12645 / Bem) (Geobacter bemidjiensis).